We begin with the raw amino-acid sequence, 607 residues long: Cyclic-di-GMP receptor FimW (607 aa).

Positions 323-492 (ERTFQRTQGQ…GGTQMGIEMI (170 aa)) are pilZ-like domain. Residues 324–328 (RTFQR) carry the RXXXR motif motif. The D/NXSXXG motif signature appears at 435–440 (NHSPGG). Residues 568–582 (SQFEYRSAEPVNTPS) show a composition bias toward polar residues. Positions 568-607 (SQFEYRSAEPVNTPSDKPVTAPVARPPAGEEDFDSLWKSL) are disordered.

As to quaternary structure, monomer in the absence of c-di-GMP. Forms dimers in the presence of c-di-GMP.

It localises to the cytoplasm. High-affinity cyclic-di-GMP binding protein that regulates type IV pili (T4P) elongation. Required for T4P-mediated surface attachment and walking motility during the early phases of surface colonization. Not required for twitching motility. Does not bind related nucleotides such as GMP, GDP, GTP or ATP. The sequence is that of Cyclic-di-GMP receptor FimW from Pseudomonas aeruginosa (strain ATCC 15692 / DSM 22644 / CIP 104116 / JCM 14847 / LMG 12228 / 1C / PRS 101 / PAO1).